The primary structure comprises 685 residues: Potassium-transporting ATPase ATP-binding subunit (685 aa).

The next 4 membrane-spanning stretches (helical) occupy residues 36 to 56 (MFVVEVGFFVTILLTIFPSIF), 68 to 88 (LIVTIILFITVLFANFAESVA), 218 to 238 (IALNTILVSLTLIFLIVLVAL), and 255 to 275 (IALLVCLIPTTIGGLLSAIGI). Aspartate 306 serves as the catalytic 4-aspartylphosphate intermediate. Residues aspartate 343, glutamate 347, 375–382 (FTAQTRMS), and lysine 394 each bind ATP. Mg(2+) contacts are provided by aspartate 517 and aspartate 521. Transmembrane regions (helical) follow at residues 587–607 (FAIIPAIFTIAIPKMQLMNIM), 615–635 (AILSALIFNAIIIPALIPIAM), and 654–674 (IVFGFGGIIVPFVGIKIIDMI).

Belongs to the cation transport ATPase (P-type) (TC 3.A.3) family. Type IA subfamily. The system is composed of three essential subunits: KdpA, KdpB and KdpC.

It localises to the cell membrane. It carries out the reaction K(+)(out) + ATP + H2O = K(+)(in) + ADP + phosphate + H(+). In terms of biological role, part of the high-affinity ATP-driven potassium transport (or Kdp) system, which catalyzes the hydrolysis of ATP coupled with the electrogenic transport of potassium into the cytoplasm. This subunit is responsible for energy coupling to the transport system and for the release of the potassium ions to the cytoplasm. The chain is Potassium-transporting ATPase ATP-binding subunit from Clostridium acetobutylicum (strain ATCC 824 / DSM 792 / JCM 1419 / IAM 19013 / LMG 5710 / NBRC 13948 / NRRL B-527 / VKM B-1787 / 2291 / W).